The sequence spans 446 residues: Probable inactive lipase MT1628 (446 aa).

This sequence belongs to the AB hydrolase superfamily. Lipase family.

This is Probable inactive lipase MT1628 from Mycobacterium tuberculosis (strain CDC 1551 / Oshkosh).